Reading from the N-terminus, the 231-residue chain is MAKLTKRQKAIAEKIEAGKSYNFEEAATLLASLPAAKFVESFDVAVNLGVDPRKSDQVVRSATVLPHGTGKTVRVAVFTQGPAAEAALAAGADRVGMDELAAEMKGGDLNYDVVIASPDAMRVVGQLGQILGPRGLMPNPKVGTVTPDVATAVKNAKAGQVRYRTDKNGIIHTSVGKIGFDAVKLKENVEALIADLKRIKPASSKGIYVKRVTLSTTMGPGLVIDQSSLDA.

It belongs to the universal ribosomal protein uL1 family. As to quaternary structure, part of the 50S ribosomal subunit.

In terms of biological role, binds directly to 23S rRNA. The L1 stalk is quite mobile in the ribosome, and is involved in E site tRNA release. Functionally, protein L1 is also a translational repressor protein, it controls the translation of the L11 operon by binding to its mRNA. This Pseudomonas fluorescens (strain Pf0-1) protein is Large ribosomal subunit protein uL1.